Reading from the N-terminus, the 295-residue chain is Defective in cullin neddylation protein 1 (295 aa).

Residues 8-45 (QKTKLRQFVQWTQVTEAVSLNFLAKANWNIEYAMTLYF) enclose the UBA-like domain. Residues 60–272 (VDRSNIERLF…LIDQFVDYCR (213 aa)) enclose the DCUN1 domain.

Interacts with the cullin cul-3. Interacts with ubiquitin via its UBA-like domain. Interacts with ned-8/nedd8.

Its subcellular location is the nucleus. Required for neddylation of cullin components of SCF-type E3 ubiquitin ligase complexes. Neddylation of cullins play an essential role in the regulation of SCF-type complexes activity. Does not act by preventing deneddylation, but rather facilitates neddylation, possibly by acting with rbx-1 to recruit the Nedd8-charged E2 enzyme to the cullin component of SCF-type complexes. The protein is Defective in cullin neddylation protein 1 (dcn-1) of Caenorhabditis elegans.